We begin with the raw amino-acid sequence, 448 residues long: MGRSYYVDDGVEKYFSKLIQQQKAYVTGLLIGQYSSQRDYAVLAAQTPQKEDQSEETKSGFSKLEGIDDEWVSMHASQLGRMLPGGLMVLGVFLMTSPDLSKDAQNVLRKLVFTVEKSSMKNRLWNFDDDDVSERVTLHICSATKKITCRTYDINDPKSTPKPADWKYQSSGLSWLTIDCSVRVDVTIPLTSSSLTYQERQKSIRLGLVKWAKEIEDSLVLFNGQVKDKSADLFEEQKKSSRSSSHYSPQIITANVLTAAPLIDSTRSTALVQPCKSSLTIQGVVKCCGYIHSNRPKVKDALQAVKRDILNTIQARCEMLFEDMMLNGPSKGTENEVCPLPQRVFVPIKGSSLKLCDYLFGDETSSDLQSHFLEIMDQEVEQNELEFPEKKCSCTQPEERESEPVSYNLESKPVDQANSSSKFLLNKGLLISTVVASIAVIISFYYII.

The next 2 membrane-spanning stretches (helical) occupy residues 76–96 (ASQL…FLMT) and 428–448 (GLLI…YYII).

This sequence belongs to the ODR-4 family.

It is found in the membrane. Its function is as follows. May play a role in the trafficking of a subset of G-protein coupled receptors. This Xenopus tropicalis (Western clawed frog) protein is Protein odr-4 homolog (odr4).